The sequence spans 378 residues: Inner membrane protein YibH (378 aa).

Topologically, residues 1–3 (MDL) are periplasmic. A helical membrane pass occupies residues 4–24 (LIVLTYVALAWAVFKIFRIPV). Over 25-26 (NQ) the chain is Cytoplasmic. The chain crosses the membrane as a helical span at residues 27–47 (WTLATAALGGVFLVSGLILLM). Over 48-54 (NYNHPYT) the chain is Periplasmic. Residues 55–75 (FTAQKAVIAIPITPQVTGIVT) traverse the membrane as a helical segment. At 76–232 (EVTDKNNQLI…RAPSNGYVTQ (157 aa)) the chain is on the cytoplasmic side. Residues 233–253 (VLIRPGTYAAALPLRPVMVFI) form a helical membrane-spanning segment. Residues 254 to 280 (PEQKRQIVAQFRQNSLLRLKPGDDAEV) are Periplasmic-facing. A helical membrane pass occupies residues 281–301 (VFNALPGQVFHGKLTSILPVV). The Cytoplasmic portion of the chain corresponds to 302 to 309 (PGGSYQAQ). The chain crosses the membrane as a helical span at residues 310–330 (GVLQSLTVVPGTDGVLGTIEL). Residues 331-378 (DPNDDIDALPDGIYAQVAVYSDHFSHVSVMRKVLLRMTSWMHYLYLDH) lie on the Periplasmic side of the membrane.

This sequence belongs to the membrane fusion protein (MFP) (TC 8.A.1) family.

It localises to the cell inner membrane. The chain is Inner membrane protein YibH (yibH) from Escherichia coli O157:H7.